The sequence spans 94 residues: Conotoxin Qc6.1 (94 aa).

The first 22 residues, 1-22, serve as a signal peptide directing secretion; that stretch reads MKLTCMMIVALLFLTAWTFVTA. A propeptide spanning residues 23–62 is cleaved from the precursor; it reads VDSKNELENRGGWGQAGGWGKLFPMARDEMKNSEVSKLDN. Intrachain disulfides connect cysteine 66–cysteine 84, cysteine 73–cysteine 88, and cysteine 83–cysteine 92.

It belongs to the conotoxin O1 superfamily. Expressed by the venom duct.

It localises to the secreted. This chain is Conotoxin Qc6.1, found in Conus quercinus (Oak cone).